The chain runs to 273 residues: Probable nicotinate-nucleotide pyrophosphorylase [carboxylating] (273 aa).

Substrate-binding positions include R91, 124–126, R148, K158, E188, D209, 235–237, and 256–258; these read TRK, SGN, and VGA.

Belongs to the NadC/ModD family. In terms of assembly, hexamer formed by 3 homodimers.

It catalyses the reaction nicotinate beta-D-ribonucleotide + CO2 + diphosphate = quinolinate + 5-phospho-alpha-D-ribose 1-diphosphate + 2 H(+). The protein operates within cofactor biosynthesis; NAD(+) biosynthesis; nicotinate D-ribonucleotide from quinolinate: step 1/1. In terms of biological role, involved in the catabolism of quinolinic acid (QA). The polypeptide is Probable nicotinate-nucleotide pyrophosphorylase [carboxylating] (nadC) (Helicobacter pylori (strain ATCC 700392 / 26695) (Campylobacter pylori)).